The following is a 603-amino-acid chain: uncharacterized protein (603 aa).

The Ubiquitin-like domain maps to 4–79 (YRIRVTTVDQ…VTFHLVIAVF (76 aa)). Disordered regions lie at residues 85-121 (TLPSATSSSVPQSRTSELSSTNSIPTPRITSLNPEEL), 159-178 (SLPTHEQSSPVAESLDNSVS), and 206-348 (AQES…NQPF). Polar residues-rich tracts occupy residues 94–117 (VPQSRTSELSSTNSIPTPRITSLN) and 162–178 (THEQSSPVAESLDNSVS). Positions 219–231 (SSSSAPLASDQSP) are enriched in low complexity. The segment covering 246–264 (LGSNSGLNPRSPNSFSSPL) has biased composition (polar residues). Low complexity predominate over residues 280-289 (SLSPLSNSSS). A compositionally biased stretch (polar residues) spans 290 to 314 (INQVHQNETHGSTISVPNPNLSQMG). Over residues 315–329 (PSHSSSVPSNLSPNP) the composition is skewed to low complexity. A compositionally biased stretch (polar residues) spans 330–348 (AQNENPSTTSIPSINNQPF). Residues 496 to 516 (ILLTSIMSVVFLLQTGALAPF) form a helical membrane-spanning segment. The tract at residues 544–578 (TAQRVVEIPNETQTEDEQDGTNTPDNRADAEEREL) is disordered. At Thr566 the chain carries Phosphothreonine. The span at 569–578 (NRADAEEREL) shows a compositional bias: basic and acidic residues.

Its subcellular location is the endoplasmic reticulum membrane. This is an uncharacterized protein from Schizosaccharomyces pombe (strain 972 / ATCC 24843) (Fission yeast).